The primary structure comprises 371 residues: Bifunctional enzyme IspD/IspF (371 aa).

The tract at residues 1 to 212 (MLDISLIMLG…CLIPPSNEHF (212 aa)) is 2-C-methyl-D-erythritol 4-phosphate cytidylyltransferase. Residues 212–371 (FTGIGFDAHE…ANLKYYDWTK (160 aa)) form a 2-C-methyl-D-erythritol 2,4-cyclodiphosphate synthase region. Residues Asp-218 and His-220 each contribute to the a divalent metal cation site. 4-CDP-2-C-methyl-D-erythritol 2-phosphate contacts are provided by residues 218–220 (DAH) and 244–245 (HS). A divalent metal cation is bound at residue His-252. Residues 266-268 (DIG), 271-275 (FPDTD), 342-345 (TTTE), Phe-349, and Arg-352 each bind 4-CDP-2-C-methyl-D-erythritol 2-phosphate.

It in the N-terminal section; belongs to the IspD/TarI cytidylyltransferase family. IspD subfamily. The protein in the C-terminal section; belongs to the IspF family. A divalent metal cation is required as a cofactor.

It catalyses the reaction 2-C-methyl-D-erythritol 4-phosphate + CTP + H(+) = 4-CDP-2-C-methyl-D-erythritol + diphosphate. It carries out the reaction 4-CDP-2-C-methyl-D-erythritol 2-phosphate = 2-C-methyl-D-erythritol 2,4-cyclic diphosphate + CMP. The protein operates within isoprenoid biosynthesis; isopentenyl diphosphate biosynthesis via DXP pathway; isopentenyl diphosphate from 1-deoxy-D-xylulose 5-phosphate: step 2/6. It participates in isoprenoid biosynthesis; isopentenyl diphosphate biosynthesis via DXP pathway; isopentenyl diphosphate from 1-deoxy-D-xylulose 5-phosphate: step 4/6. Bifunctional enzyme that catalyzes the formation of 4-diphosphocytidyl-2-C-methyl-D-erythritol from CTP and 2-C-methyl-D-erythritol 4-phosphate (MEP) (IspD), and catalyzes the conversion of 4-diphosphocytidyl-2-C-methyl-D-erythritol 2-phosphate (CDP-ME2P) to 2-C-methyl-D-erythritol 2,4-cyclodiphosphate (ME-CPP) with a corresponding release of cytidine 5-monophosphate (CMP) (IspF). In Campylobacter curvus (strain 525.92), this protein is Bifunctional enzyme IspD/IspF.